The sequence spans 1531 residues: Probable outer membrane protein PmpD (1531 aa).

The first 20 residues, 1 to 20 (MSSEKDIKSTCSKFSLSVVA), serve as a signal peptide directing secretion. One can recognise an Autotransporter domain in the interval 1244–1531 (EFDYSTNVWG…EANTGLRLIF (288 aa)).

This sequence belongs to the PMP outer membrane protein family.

The protein resides in the secreted. Its subcellular location is the cell wall. It localises to the cell outer membrane. The polypeptide is Probable outer membrane protein PmpD (pmpD) (Chlamydia trachomatis serovar D (strain ATCC VR-885 / DSM 19411 / UW-3/Cx)).